Here is a 319-residue protein sequence, read N- to C-terminus: 1-aminocyclopropane-1-carboxylate oxidase (319 aa).

The region spanning 153–253 is the Fe2OG dioxygenase domain; sequence PTFGTKVSNY…RMSIASFYNP (101 aa). Residues H177, D179, and H234 each contribute to the Fe cation site.

Belongs to the iron/ascorbate-dependent oxidoreductase family. Requires Fe cation as cofactor.

It carries out the reaction 1-aminocyclopropane-1-carboxylate + L-ascorbate + O2 = ethene + L-dehydroascorbate + hydrogen cyanide + CO2 + 2 H2O. It participates in alkene biosynthesis; ethylene biosynthesis via S-adenosyl-L-methionine; ethylene from S-adenosyl-L-methionine: step 2/2. This is 1-aminocyclopropane-1-carboxylate oxidase (ACO1) from Prunus mume (Japanese apricot).